Reading from the N-terminus, the 105-residue chain is Met repressor (105 aa).

The protein belongs to the MetJ family. As to quaternary structure, homodimer.

The protein localises to the cytoplasm. In terms of biological role, this regulatory protein, when combined with SAM (S-adenosylmethionine) represses the expression of the methionine regulon and of enzymes involved in SAM synthesis. This chain is Met repressor, found in Haemophilus influenzae (strain PittEE).